The primary structure comprises 524 residues: MDPHGALFFYLCLLAAQVVLVETLSDLLVLMKRLEQPVGRGLSSRARHIHSLEQKLLNASFGGHNLTLQTNSIQSLVFKLSCDFPGLSLSSTTLTNVSQVRAPHAMQFPAELTKGACVTSRPAELRLICIYFFTAHLFQDDRNSSLLNNYVLGAQLDHRPVNNLQKPVNISFWHNRSLEGYTVSCVFWKEGASKSSWGAWSPEGCYTEQPSATQVLCHCNHLTYFAVLMQLSGDPVPAELQVPLEYISFVGCSISIVASLLTILLYAQSRKQSDSTTRIHMNLNGSVLLLNVTFLLSSQMTLPTMPRPVCKVLAAVLHYALLSSLTWMAIEGFNLYLFLGRVYNAYIRRYLLKLCMLGWGFPALLVLLLLMIKSSVYGPCVTSLSKSQENGTGFQNVSMCWIRSPMVHSILVMGYGGFTSLFNLVVLAWALWILCRLRAREKALSPWAYRDTAMVLGLTVLLGTTWTLAFFSFGVFLLPQLFLFTIFNSLYGFFLFLWFCSQKRYSDAEAKAEMEAVSSSQMTH.

Residues M1–T23 form the signal peptide. Topologically, residues L24 to Y246 are extracellular. N-linked (GlcNAc...) asparagine glycans are attached at residues N58, N65, N96, N143, N169, and N175. Residues Q74–P235 enclose the GAIN-B domain. 2 cysteine pairs are disulfide-bonded: C185/C217 and C205/C219. The segment at C185–P235 is GPS. Residues Y224–S232 are stachel. A helical transmembrane segment spans residues I247 to A267. At Q268–N284 the chain is on the cytoplasmic side. Residues G285–M305 traverse the membrane as a helical segment. At P306–Y319 the chain is on the extracellular side. C310 and C400 are disulfide-bonded. Residues A320 to G340 traverse the membrane as a helical segment. Topologically, residues R341–L351 are cytoplasmic. The chain crosses the membrane as a helical span at residues L352–I372. Residues K373–M413 are Extracellular-facing. N-linked (GlcNAc...) asparagine glycans are attached at residues N390 and N396. The helical transmembrane segment at G414–L434 threads the bilayer. The Cytoplasmic portion of the chain corresponds to C435–A453. A helical membrane pass occupies residues M454–F476. At L477 to Q480 the chain is on the extracellular side. A helical membrane pass occupies residues L481 to C500. The Cytoplasmic segment spans residues S501–H524.

The protein belongs to the G-protein coupled receptor 2 family. Adhesion G-protein coupled receptor (ADGR) subfamily. Heterodimer of 2 chains generated by proteolytic processing; the large extracellular N-terminal fragment and the membrane-bound C-terminal fragment predominantly remain associated and non-covalently linked. Post-translationally, autoproteolytically processed at the GPS region of the GAIN-B domain; this cleavage modulates receptor activity. In terms of tissue distribution, expressed at least in kidney, heart, brain and spleen. As to expression, isoform 1 is predominant in spleen. In the kidney, both isoform 1 and isoform 2 are expressed at similar levels. Isoform 2 is the major form in heart and brain. In the kidney, both isoform 1 and isoform 2 are expressed at similar levels.

It is found in the cell membrane. Its activity is regulated as follows. Forms a heterodimer of 2 chains generated by proteolytic processing that remain associated through non-covalent interactions mediated by the GAIN-B domain. In the inactivated receptor, the Stachel sequence (also named stalk) is embedded in the GAIN-B domain, where it adopts a beta-strand conformation. On activation, the Stachel moves into the 7 transmembrane region and adopts a twisted hook-shaped configuration that forms contacts within the receptor, leading to coupling of a G-alpha protein, which activates signaling. The cleaved GAIN-B and N-terminal domains can then dissociate from the rest of the receptor. In terms of biological role, orphan adhesion G-protein coupled receptor (aGPCR). Ligand binding causes a conformation change that triggers signaling via guanine nucleotide-binding proteins (G proteins) and modulates the activity of downstream effectors, such as adenylate cyclase. ADGRG5 is specifically coupled to G(s) G proteins and mediates activation of adenylate cyclase activity. Isoform 1, but not isoform 2, is constitutively active, as evidenced by elevated basal cAMP levels, and responds to mechanical activation (shaking). The sequence is that of Adhesion G-protein coupled receptor G5 from Mus musculus (Mouse).